The chain runs to 341 residues: Methionine import ATP-binding protein MetN 1 (341 aa).

In terms of domain architecture, ABC transporter spans 2–241; sequence IEFRQVSKSF…PKTTIAQNFV (240 aa). ATP is bound at residue 38 to 45; sequence GYSGAGKS.

This sequence belongs to the ABC transporter superfamily. Methionine importer (TC 3.A.1.24) family. As to quaternary structure, the complex is composed of two ATP-binding proteins (MetN), two transmembrane proteins (MetI) and a solute-binding protein (MetQ).

Its subcellular location is the cell membrane. The catalysed reaction is L-methionine(out) + ATP + H2O = L-methionine(in) + ADP + phosphate + H(+). It catalyses the reaction D-methionine(out) + ATP + H2O = D-methionine(in) + ADP + phosphate + H(+). Its function is as follows. Part of the ABC transporter complex MetNIQ involved in methionine import. Responsible for energy coupling to the transport system. The sequence is that of Methionine import ATP-binding protein MetN 1 from Staphylococcus aureus (strain bovine RF122 / ET3-1).